The following is a 423-amino-acid chain: MGTHVIKMPDIGEGIAQVELVEWFVKVGDIIAEDQVVADVMTDKATVEIPSPVSGKVLALGGQPGEVMAVGSELIRIEVEGSGNHVDVPQAKPAEVPAAPVAAKPEPQKDVKPAAYQASASHEAAPIVPRQPGDKPLASPAVRKRALDAGIELRYVHGSGPAGRILHEDLDAFMSKPQSAAGQTPNGYARRTDSEQVPVIGLRRKIAQRMQDAKRRVAHFSYVEEIDVTALEALRQQLNSKHGDSRGKLTLLPFLVRALVVALRDFPQINATYDDEAQIITRHGAVHVGIATQGDNGLMVPVLRHAEAGSLWANAGEISRLANAARNNKASREELSGSTITLTSLGALGGIVSTPVVNTPEVAIVGVNRMVERPVVIDGQIVVRKMMNLSSSFDHRVVDGMDAALFIQAVRGLLEQPACLFVE.

One can recognise a Lipoyl-binding domain in the interval 3–78 (THVIKMPDIG…AVGSELIRIE (76 aa)). An N6-lipoyllysine modification is found at Lys-44. Residues 137 to 174 (LASPAVRKRALDAGIELRYVHGSGPAGRILHEDLDAFM) form the Peripheral subunit-binding (PSBD) domain. Active-site residues include His-395 and Asp-399.

It belongs to the 2-oxoacid dehydrogenase family. Forms a 24-polypeptide structural core with octahedral symmetry. It depends on (R)-lipoate as a cofactor.

The enzyme catalyses N(6)-[(R)-dihydrolipoyl]-L-lysyl-[protein] + 2-methylpropanoyl-CoA = N(6)-[(R)-S(8)-2-methylpropanoyldihydrolipoyl]-L-lysyl-[protein] + CoA. The branched-chain alpha-keto dehydrogenase complex catalyzes the overall conversion of alpha-keto acids to acyl-CoA and CO(2). It contains multiple copies of three enzymatic components: branched-chain alpha-keto acid decarboxylase (E1), lipoamide acyltransferase (E2) and lipoamide dehydrogenase (E3). The protein is Lipoamide acyltransferase component of branched-chain alpha-keto acid dehydrogenase complex (bkdB) of Pseudomonas putida (Arthrobacter siderocapsulatus).